A 244-amino-acid polypeptide reads, in one-letter code: uncharacterized protein (244 aa).

6 helical membrane-spanning segments follow: residues 21–41 (FPYS…YGIY), 44–64 (ALGF…AGSV), 66–86 (FIAA…LITL), 139–159 (WYMF…AAMG), 165–185 (VLPF…LVIF), and 199–219 (LLGL…YFLI).

This sequence belongs to the AzlC family.

It is found in the cell membrane. This is an uncharacterized protein from Haemophilus influenzae (strain ATCC 51907 / DSM 11121 / KW20 / Rd).